The sequence spans 436 residues: Regulatory protein E2 (436 aa).

The interval 1–201 is transactivation domain; the sequence is MEKLSERFSA…DTVFTPVTSS (201 aa). Residues 195-209 are compositionally biased toward low complexity; it reads FTPVTSSTPPVGVAS. Residues 195–328 form a disordered region; the sequence is FTPVTSSTPP…DGGGVAPDEV (134 aa). The segment covering 210 to 230 has biased composition (polar residues); that stretch reads QNSAPEPASTSDSPQRSSQVT. The segment covering 284 to 293 has biased composition (basic and acidic residues); it reads LSRESAESPR. A DNA-binding domain region spans residues 352–436; it reads DPPVILLRGA…EWSYGQFDDL (85 aa).

The protein belongs to the papillomaviridae E2 protein family. In terms of assembly, binds DNA as homodimer. Interacts with protein E1; this interaction greatly increases E1 DNA-binding activity. Interacts with protein L1; this interaction enhances E2-dependent replication and transcription activation. Interacts with protein L2; this interaction inhibits E2 transcriptional activity but not DNA replication function E2. Interacts with protein E7; this interaction inhibits E7 oncogenic activity. Interacts with host TAF1; this interaction modulates E2-dependent transcriptional regulation. Interacts with host BRD4; this interaction mediates E2 transcriptional activation function. Additionally, the interaction with host BRD4 on mitotic chromosomes mediates tethering of the viral genome. Interacts with host TOPBP1; this interaction is required for optimal viral DNA replication. In terms of processing, phosphorylated.

Its subcellular location is the host nucleus. Its function is as follows. Plays a role in the initiation of viral DNA replication. A dimer of E2 interacts with a dimer of E1 in order to improve specificity of E1 DNA binding activity. Once the complex recognizes and binds DNA at specific sites, the E2 dimer is removed from DNA. E2 also regulates viral transcription through binding to the E2RE response element (5'-ACCNNNNNNGGT-3') present in multiple copies in the regulatory regions of the viral genome. Activates or represses transcription depending on E2RE's position with regards to proximal promoter elements including the TATA-box. Repression occurs by sterically hindering the assembly of the transcription initiation complex. This Human papillomavirus 22 protein is Regulatory protein E2.